A 519-amino-acid polypeptide reads, in one-letter code: Carboxyl-terminal-processing peptidase 3, chloroplastic (519 aa).

Residues 186-274 (YQSFRIGSDG…IKLKNVNGSG (89 aa)) enclose the PDZ domain. Residues serine 407 and lysine 432 each act as charge relay system in the active site.

Belongs to the peptidase S41A family.

It localises to the plastid. It is found in the chloroplast thylakoid lumen. The catalysed reaction is The enzyme shows specific recognition of a C-terminal tripeptide, Xaa-Yaa-Zaa, in which Xaa is preferably Ala or Leu, Yaa is preferably Ala or Tyr, and Zaa is preferably Ala, but then cleaves at a variable distance from the C-terminus. A typical cleavage is -Ala-Ala-|-Arg-Ala-Ala-Lys-Glu-Asn-Tyr-Ala-Leu-Ala-Ala.. Protease involved in the C-terminal processing of the chloroplastic D1 protein of photosystem II. This proteolytic processing is necessary to allow the light-driven assembly of the tetranuclear manganese cluster, which is responsible for photosynthetic water oxidation. This chain is Carboxyl-terminal-processing peptidase 3, chloroplastic (CTPA3), found in Arabidopsis thaliana (Mouse-ear cress).